Here is a 273-residue protein sequence, read N- to C-terminus: 4-hydroxy-tetrahydrodipicolinate reductase (273 aa).

Residues Gly12–Met17 and Glu38 each bind NAD(+). Residue Arg39 coordinates NADP(+). NAD(+) is bound by residues Gly102–Thr104 and Ala126–Phe129. Catalysis depends on His159, which acts as the Proton donor/acceptor. His160 is a binding site for (S)-2,3,4,5-tetrahydrodipicolinate. Lys163 serves as the catalytic Proton donor. Gly169–Thr170 is a (S)-2,3,4,5-tetrahydrodipicolinate binding site.

Belongs to the DapB family. Homotetramer.

Its subcellular location is the cytoplasm. It catalyses the reaction (S)-2,3,4,5-tetrahydrodipicolinate + NAD(+) + H2O = (2S,4S)-4-hydroxy-2,3,4,5-tetrahydrodipicolinate + NADH + H(+). It carries out the reaction (S)-2,3,4,5-tetrahydrodipicolinate + NADP(+) + H2O = (2S,4S)-4-hydroxy-2,3,4,5-tetrahydrodipicolinate + NADPH + H(+). The protein operates within amino-acid biosynthesis; L-lysine biosynthesis via DAP pathway; (S)-tetrahydrodipicolinate from L-aspartate: step 4/4. In terms of biological role, catalyzes the conversion of 4-hydroxy-tetrahydrodipicolinate (HTPA) to tetrahydrodipicolinate. The polypeptide is 4-hydroxy-tetrahydrodipicolinate reductase (Yersinia enterocolitica serotype O:8 / biotype 1B (strain NCTC 13174 / 8081)).